The sequence spans 151 residues: S-ribosylhomocysteine lyase (151 aa).

The Fe cation site is built by histidine 54, histidine 58, and cysteine 121.

The protein belongs to the LuxS family. In terms of assembly, homodimer. Requires Fe cation as cofactor.

The catalysed reaction is S-(5-deoxy-D-ribos-5-yl)-L-homocysteine = (S)-4,5-dihydroxypentane-2,3-dione + L-homocysteine. Functionally, involved in the synthesis of autoinducer 2 (AI-2) which is secreted by bacteria and is used to communicate both the cell density and the metabolic potential of the environment. The regulation of gene expression in response to changes in cell density is called quorum sensing. Catalyzes the transformation of S-ribosylhomocysteine (RHC) to homocysteine (HC) and 4,5-dihydroxy-2,3-pentadione (DPD). In Clostridioides difficile (strain 630) (Peptoclostridium difficile), this protein is S-ribosylhomocysteine lyase.